The sequence spans 72 residues: Translation initiation factor IF-1 (72 aa).

One can recognise an S1-like domain in the interval 1–72 (MAREDHIEME…SKGRIVYRAR (72 aa)).

Belongs to the IF-1 family. As to quaternary structure, component of the 30S ribosomal translation pre-initiation complex which assembles on the 30S ribosome in the order IF-2 and IF-3, IF-1 and N-formylmethionyl-tRNA(fMet); mRNA recruitment can occur at any time during PIC assembly.

The protein resides in the cytoplasm. One of the essential components for the initiation of protein synthesis. Stabilizes the binding of IF-2 and IF-3 on the 30S subunit to which N-formylmethionyl-tRNA(fMet) subsequently binds. Helps modulate mRNA selection, yielding the 30S pre-initiation complex (PIC). Upon addition of the 50S ribosomal subunit IF-1, IF-2 and IF-3 are released leaving the mature 70S translation initiation complex. This is Translation initiation factor IF-1 from Chromohalobacter salexigens (strain ATCC BAA-138 / DSM 3043 / CIP 106854 / NCIMB 13768 / 1H11).